Here is a 300-residue protein sequence, read N- to C-terminus: Epimerase family protein SACOL0834 (300 aa).

Belongs to the NAD(P)-dependent epimerase/dehydratase family. SDR39U1 subfamily.

The chain is Epimerase family protein SACOL0834 from Staphylococcus aureus (strain COL).